The sequence spans 434 residues: Histidinol dehydrogenase (434 aa).

NAD(+) contacts are provided by Tyr130, Gln188, and Asn211. Substrate is bound by residues Ser237, Gln259, and His262. Gln259 and His262 together coordinate Zn(2+). Catalysis depends on proton acceptor residues Glu326 and His327. Substrate is bound by residues His327, Asp360, Glu414, and His419. Zn(2+) is bound at residue Asp360. His419 serves as a coordination point for Zn(2+).

The protein belongs to the histidinol dehydrogenase family. Homodimer. Requires Zn(2+) as cofactor.

The catalysed reaction is L-histidinol + 2 NAD(+) + H2O = L-histidine + 2 NADH + 3 H(+). It participates in amino-acid biosynthesis; L-histidine biosynthesis; L-histidine from 5-phospho-alpha-D-ribose 1-diphosphate: step 9/9. Catalyzes the sequential NAD-dependent oxidations of L-histidinol to L-histidinaldehyde and then to L-histidine. This Escherichia coli (strain K12) protein is Histidinol dehydrogenase.